A 162-amino-acid chain; its full sequence is Ribosome maturation factor RimM (162 aa).

The PRC barrel domain occupies 86 to 160; sequence EGRYYYFALI…GIHVDPIPGL (75 aa).

This sequence belongs to the RimM family. Binds ribosomal protein uS19.

It is found in the cytoplasm. In terms of biological role, an accessory protein needed during the final step in the assembly of 30S ribosomal subunit, possibly for assembly of the head region. Essential for efficient processing of 16S rRNA. May be needed both before and after RbfA during the maturation of 16S rRNA. It has affinity for free ribosomal 30S subunits but not for 70S ribosomes. The polypeptide is Ribosome maturation factor RimM (Thermus thermophilus (strain ATCC BAA-163 / DSM 7039 / HB27)).